Consider the following 392-residue polypeptide: ATP phosphoribosyltransferase regulatory subunit (392 aa).

Belongs to the class-II aminoacyl-tRNA synthetase family. HisZ subfamily. Heteromultimer composed of HisG and HisZ subunits.

The protein localises to the cytoplasm. It functions in the pathway amino-acid biosynthesis; L-histidine biosynthesis; L-histidine from 5-phospho-alpha-D-ribose 1-diphosphate: step 1/9. Its function is as follows. Required for the first step of histidine biosynthesis. May allow the feedback regulation of ATP phosphoribosyltransferase activity by histidine. This Synechococcus sp. (strain CC9902) protein is ATP phosphoribosyltransferase regulatory subunit.